A 628-amino-acid polypeptide reads, in one-letter code: MTWSQDLAHKTYSIRHWADGYFEVNDAGHMVVMPLGGDGVRISLPEVVDAARAAGAKLPLLLRFPDILGHRLGKLQAAFAQAQSEWEYAGGYTAVYPIKVNQHRGVAGVLASHQGDGFGLEAGSKPELMAVLALSRPGGLIVCNGYKDREYIRLALIGRKLGLKTFIVIEKPSELRMVLEEAKTLDVLPGLGVRVRLASLGAGKWQNSGGDKAKFGLSPRQVLDVWKVLRGTEYADCLNVMHFHMGSQISNVRDIAKGMREATRYFVELSRLGAKITHVDVGGGLGIDYEGTRSRSDCSINYGLQAYASHIVQPLASACEDYDLVPPRIVTECGRAMTAHHAVLIANVTEVEAVPEGRVPGVCDDEPAVVRHMREIYGELDARPAIELFYEAQHFHAEGLAAYTLGQIDLVHRARIDDLFYAISHGVRERLSHEEKSHRPVLDELNERLVDKYFVNFSVFESIPDVWAINQIFPIVPIERLNEVPTRRGVVCDLTCDSDGTVKQYVENESLDSALPLHVLRHGEAYRIGFFLVGAYQEILGDIHNLFGDTDAVEVAVDGRGYRIAQQRCGDTTDVMLDYVGYALDEVRRVYAQRIAAAGMSAAESKALSDMLEAGLTGYPYLSDVPLE.

Lys99 is modified (N6-(pyridoxal phosphate)lysine). 279–289 (VDVGGGLGIDY) provides a ligand contact to substrate.

The protein belongs to the Orn/Lys/Arg decarboxylase class-II family. SpeA subfamily. Mg(2+) serves as cofactor. The cofactor is pyridoxal 5'-phosphate.

The catalysed reaction is L-arginine + H(+) = agmatine + CO2. The protein operates within amine and polyamine biosynthesis; agmatine biosynthesis; agmatine from L-arginine: step 1/1. Catalyzes the biosynthesis of agmatine from arginine. In Xylella fastidiosa (strain M23), this protein is Biosynthetic arginine decarboxylase.